We begin with the raw amino-acid sequence, 283 residues long: Syntaxin VAM3 (283 aa).

Positions 1 to 26 (MSFFDIEAQSSKGNSQQEPQFSTNQK) are disordered. Residues 1-261 (MSFFDIEAQS…ADQHQRDRNK (261 aa)) are Cytoplasmic-facing. Residues 8–25 (AQSSKGNSQQEPQFSTNQ) show a composition bias toward polar residues. Coiled coils occupy residues 28-48 (KELS…EKEC) and 84-111 (LIHQ…SYNQ). Disordered stretches follow at residues 116–146 (FPLK…DPES) and 162–182 (NEGQ…QGLS). Over residues 127-144 (SKERKDIHPRTEAVRQDP) the composition is skewed to basic and acidic residues. A coiled-coil region spans residues 169–189 (QLQEEQEQQQQGLSQEELDFQ). Residues 190 to 252 (TIIHQERSQQ…QNANKQLTRA (63 aa)) enclose the t-SNARE coiled-coil homology domain. The helical; Anchor for type IV membrane protein transmembrane segment at 262–282 (CGKVTLIIIIVVCMVVLLAVL) threads the bilayer. A topological domain (vacuolar) is located at residue Ser-283.

Belongs to the syntaxin family. Associates with VAM7.

It is found in the vacuole membrane. Its function is as follows. Required for vacuolar assembly. Provides the t-SNARE function in a late step of the vacuolar assembly. Required for homotypic vacuole membrane fusion, autophagy and fusion of biosynthetic transport vesicles with the vacuole. Required for the delivery of alpha-factor receptor-ligand complexes to the vacuole. The chain is Syntaxin VAM3 (VAM3) from Saccharomyces cerevisiae (strain ATCC 204508 / S288c) (Baker's yeast).